Consider the following 1054-residue polypeptide: Acid trehalase (1054 aa).

An N-terminal signal peptide occupies residues 1-21 (MRFKSVFTLLPLLAQLPSGGA). 5 N-linked (GlcNAc...) asparagine glycosylation sites follow: N47, N135, N176, N283, and N307. 448-449 (WD) contacts substrate. N-linked (GlcNAc...) asparagine glycans are attached at residues N493, N513, N570, and N578. The active-site Proton donor is the E584. N-linked (GlcNAc...) asparagine glycosylation is found at N618 and N644. 650–651 (KQ) provides a ligand contact to substrate. 9 N-linked (GlcNAc...) asparagine glycosylation sites follow: N665, N734, N803, N826, N838, N903, N937, N966, and N992.

Belongs to the glycosyl hydrolase 65 family.

It catalyses the reaction alpha,alpha-trehalose + H2O = alpha-D-glucose + beta-D-glucose. This chain is Acid trehalase (treA), found in Emericella nidulans (strain FGSC A4 / ATCC 38163 / CBS 112.46 / NRRL 194 / M139) (Aspergillus nidulans).